A 107-amino-acid chain; its full sequence is Nucleoid-associated protein RF_1365 (107 aa).

The protein belongs to the YbaB/EbfC family. In terms of assembly, homodimer.

It localises to the cytoplasm. Its subcellular location is the nucleoid. Functionally, binds to DNA and alters its conformation. May be involved in regulation of gene expression, nucleoid organization and DNA protection. The polypeptide is Nucleoid-associated protein RF_1365 (Rickettsia felis (strain ATCC VR-1525 / URRWXCal2) (Rickettsia azadi)).